We begin with the raw amino-acid sequence, 218 residues long: MGMWSIGVGAVGAAAVALLLANTDMFLSKPRKAALEYLEDIDLKTLEKEPRTFKAKELWEKNGAVIMAVRRPGCFLCRAEAADLMSLKPKLDELGVPLYAVVKEQVKREVEDFQPYFKGEIFLDEKKKFYGPERRKMMFMGLIRLGVWYNSFRAWNGGFSGNLEGEGFILGGVFVIGSGKQGILLEHREKEFGDRVNPLSVLEAVKKIKLQTPASGRS.

Positions 3–101 (MWSIGVGAVG…DELGVPLYAV (99 aa)) are thioredoxin-like fold. Residues Cys-74 and Cys-77 each act as redox-active in the active site.

Belongs to the peroxiredoxin-like PRXL2 family. PRXL2A subfamily. Expressed in kidney, liver, skin, and brain. Widely expressed with highest levels detected in adipose tissue.

The protein localises to the cytoplasm. It is found in the secreted. Functionally, involved in redox regulation of the cell. Acts as an antioxidant. Inhibits TNFSF11-induced NFKB1 and JUN activation and osteoclast differentiation. May affect bone resorption and help to maintain bone mass. Acts as a negative regulator of macrophage-mediated inflammation by inhibiting macrophage production of inflammatory cytokines, probably through suppression of the MAPK signaling pathway. In Mus musculus (Mouse), this protein is Peroxiredoxin-like 2A (Prxl2a).